Consider the following 248-residue polypeptide: Gamma-interferon-inducible lysosomal thiol reductase (248 aa).

Residues 1 to 26 (MSWSPILPFLSLLLLLFPLEVPRAAT) form the signal peptide. A propeptide spans 27 to 54 (ASLSQASSEGTTTCKAHDVCLLGPRPLP) (removed in mature form). An intrachain disulfide couples C69 to C72. N92 and N105 each carry an N-linked (GlcNAc...) asparagine glycan. A propeptide spans 231 to 248 (KPDICSSIADSPRKVCYK) (removed in mature form).

The protein belongs to the GILT family. Dimer; disulfide-linked. Post-translationally, N-glycosylated. Sugar chains contain mannose-6-phosphate. In terms of processing, synthesized as a 35 kDa precursor which is then processed into the mature 30 kDa form via cleavage of N-terminal and C-terminal propeptides. Processing of the precursor is mediated by multiple lysosomal proteases.

Its subcellular location is the secreted. It localises to the lysosome. In terms of biological role, lysosomal thiol reductase that can reduce protein disulfide bonds. May facilitate the complete unfolding of proteins destined for lysosomal degradation. Plays an important role in antigen processing. Facilitates the generation of MHC class II-restricted epitodes from disulfide bond-containing antigen by the endocytic reduction of disulfide bonds. Also facilitates MHC class I-restricted recognition of exogenous antigens containing disulfide bonds by CD8+ T-cells or crosspresentation. This Mus musculus (Mouse) protein is Gamma-interferon-inducible lysosomal thiol reductase (Ifi30).